The sequence spans 261 residues: tRNA pseudouridine synthase A (261 aa).

The active-site Nucleophile is the aspartate 51. Tyrosine 109 contributes to the substrate binding site.

It belongs to the tRNA pseudouridine synthase TruA family. In terms of assembly, homodimer.

The enzyme catalyses uridine(38/39/40) in tRNA = pseudouridine(38/39/40) in tRNA. Its function is as follows. Formation of pseudouridine at positions 38, 39 and 40 in the anticodon stem and loop of transfer RNAs. The sequence is that of tRNA pseudouridine synthase A from Methylobacillus flagellatus (strain ATCC 51484 / DSM 6875 / VKM B-1610 / KT).